The sequence spans 723 residues: Methionine--tRNA ligase (723 aa).

Residues 12–22 (PYANGDIHLGH) carry the 'HIGH' region motif. Positions 143, 146, 156, and 159 each coordinate Zn(2+). The short motif at 345–349 (KMSKS) is the 'KMSKS' region element. ATP is bound at residue Lys348. The tract at residues 568–604 (PAAATAPAKDAKPAKEAGSQQRHAEKQQHAAGVSETA) is disordered. Residues 612–723 (DFTKVDLRIA…EGAQAGMRVK (112 aa)) enclose the tRNA-binding domain.

The protein belongs to the class-I aminoacyl-tRNA synthetase family. MetG type 1 subfamily. In terms of assembly, homodimer. Zn(2+) serves as cofactor.

The protein localises to the cytoplasm. The enzyme catalyses tRNA(Met) + L-methionine + ATP = L-methionyl-tRNA(Met) + AMP + diphosphate. In terms of biological role, is required not only for elongation of protein synthesis but also for the initiation of all mRNA translation through initiator tRNA(fMet) aminoacylation. The protein is Methionine--tRNA ligase of Azoarcus sp. (strain BH72).